Consider the following 105-residue polypeptide: Iron-sulfur cluster assembly protein CyaY (105 aa).

It belongs to the frataxin family.

Its function is as follows. Involved in iron-sulfur (Fe-S) cluster assembly. May act as a regulator of Fe-S biogenesis. This chain is Iron-sulfur cluster assembly protein CyaY, found in Paraburkholderia phymatum (strain DSM 17167 / CIP 108236 / LMG 21445 / STM815) (Burkholderia phymatum).